Here is a 592-residue protein sequence, read N- to C-terminus: MTAPNVNTLWAETLVGELVAGGVDAVCLSPGSRSTPLTVAFAEHPDIEVFSHLDERSAAFFALGRARRTGEPTPLVCTSGTAAANYHPAVIEANQSGVPLLLLTADRPPELIDSGANQTVDQEKLYGDAVRWYRDMPEPEAEPRKVRMLRTTAARALAESTGSDPGPVHLNCRFRKPLEPTPMPEDDPAGVPADWAGGDNGAKIGRDGPFVTTSEGVETPDEQTVRRVQDALEAAERGLIVAGPADQGLSADSLERLAAATGFPVLADPLSDLRFGPHVDRLDVPVCGGYDGYLGSDSVDQWDDPDVVVRFGASPTSKPLRHYLRDADCQQFLVDPAGGWSEAEFTATNLLVANPDATADALAGETLGGVAASWREQFIRAEQTHWDAVTETASETYWEGGVLSDVTALAPDPATLFISNSMPIRDMDRFGGPRDADLTVLGNRGASGIDGITSTALGAGSATSDPLVLVTGDLAYYHDMNGLLALGRCAVDATVVLLNNDGGGIFHMLPIEDHPTFEDQFRTPHGLDFEPTEALYSLQFERVADRRQFRERFAESVQTDGTQVIEVRFDAGDSHAVRDQLTEQVAETLAGD.

It belongs to the TPP enzyme family. MenD subfamily. In terms of assembly, homodimer. Mg(2+) serves as cofactor. It depends on Mn(2+) as a cofactor. Thiamine diphosphate is required as a cofactor.

The enzyme catalyses isochorismate + 2-oxoglutarate + H(+) = 5-enolpyruvoyl-6-hydroxy-2-succinyl-cyclohex-3-ene-1-carboxylate + CO2. It functions in the pathway quinol/quinone metabolism; 1,4-dihydroxy-2-naphthoate biosynthesis; 1,4-dihydroxy-2-naphthoate from chorismate: step 2/7. Its pathway is quinol/quinone metabolism; menaquinone biosynthesis. Its function is as follows. Catalyzes the thiamine diphosphate-dependent decarboxylation of 2-oxoglutarate and the subsequent addition of the resulting succinic semialdehyde-thiamine pyrophosphate anion to isochorismate to yield 2-succinyl-5-enolpyruvyl-6-hydroxy-3-cyclohexene-1-carboxylate (SEPHCHC). This is 2-succinyl-5-enolpyruvyl-6-hydroxy-3-cyclohexene-1-carboxylate synthase from Haloarcula marismortui (strain ATCC 43049 / DSM 3752 / JCM 8966 / VKM B-1809) (Halobacterium marismortui).